We begin with the raw amino-acid sequence, 264 residues long: tRNA (guanine-N(1)-)-methyltransferase (264 aa).

Residues G116 and 136 to 141 (VGDFVL) contribute to the S-adenosyl-L-methionine site.

This sequence belongs to the RNA methyltransferase TrmD family. As to quaternary structure, homodimer.

The protein resides in the cytoplasm. The enzyme catalyses guanosine(37) in tRNA + S-adenosyl-L-methionine = N(1)-methylguanosine(37) in tRNA + S-adenosyl-L-homocysteine + H(+). Specifically methylates guanosine-37 in various tRNAs. This Koribacter versatilis (strain Ellin345) protein is tRNA (guanine-N(1)-)-methyltransferase.